A 232-amino-acid polypeptide reads, in one-letter code: Acyl-protein thioesterase 1 (232 aa).

Active-site charge relay system residues include serine 125, aspartate 179, and histidine 212.

This sequence belongs to the AB hydrolase superfamily. AB hydrolase 2 family.

The protein resides in the cytoplasm. It is found in the nucleus. It carries out the reaction S-hexadecanoyl-L-cysteinyl-[protein] + H2O = L-cysteinyl-[protein] + hexadecanoate + H(+). Its function is as follows. Hydrolyzes fatty acids from S-acylated cysteine residues in proteins with a strong preference for palmitoylated G-alpha proteins over other acyl substrates. Mediates the deacylation of G-alpha proteins such as GPA1 in vivo, but has weak or no activity toward palmitoylated Ras proteins. Has weak lysophospholipase activity in vitro; however such activity may not exist in vivo. The protein is Acyl-protein thioesterase 1 of Debaryomyces hansenii (strain ATCC 36239 / CBS 767 / BCRC 21394 / JCM 1990 / NBRC 0083 / IGC 2968) (Yeast).